Consider the following 160-residue polypeptide: Large ribosomal subunit protein uL11 (160 aa).

This sequence belongs to the universal ribosomal protein uL11 family. In terms of assembly, part of the ribosomal stalk of the 50S ribosomal subunit. Interacts with L10 and the large rRNA to form the base of the stalk. L10 forms an elongated spine to which L12 dimers bind in a sequential fashion forming a multimeric L10(L12)X complex.

Its function is as follows. Forms part of the ribosomal stalk which helps the ribosome interact with GTP-bound translation factors. The sequence is that of Large ribosomal subunit protein uL11 from Methanothermobacter thermautotrophicus (strain ATCC 29096 / DSM 1053 / JCM 10044 / NBRC 100330 / Delta H) (Methanobacterium thermoautotrophicum).